We begin with the raw amino-acid sequence, 327 residues long: Homeotic protein distal-less (327 aa).

Positions 124-183 (MRKPRTIYSSLQLQQLNRRFQRTQYLALPERAELAASLGLTQTQVKIWFQNRRSKYKKMM) form a DNA-binding region, homeobox. Residues 181–303 (KMMKAAQGPG…THHHNPPPQM (123 aa)) are disordered. Positions 231–249 (LPPGHSPTPSSTPVSELSP) are enriched in low complexity. The segment covering 266–275 (QKPHWIDHKP) has biased composition (basic and acidic residues). The span at 276–286 (PPQMTPQPPHP) shows a compositional bias: pro residues.

In terms of tissue distribution, expressed in the embryo in limb primordia of the head and thoracic segments. Expressed in regions of the larval leg, wing, antennal and haltere disks that form the distal-most regions of the mature structures (in the leg this corresponds to the tarsus and the distal tibia). Found in the optic center of the developing larval brain.

It is found in the nucleus. Functionally, transcription factor that plays a role in larval and adult appendage development. Specifies the identity of ventral appendages (including legs and antennae) and suppresses dorsal appendage development. Involved in patterning the distal-proximal limb axis. May control the adhesive properties of cells during limb morphogenesis. Also has a secondary role in the normal patterning of the wing margin. The protein is Homeotic protein distal-less (Dll) of Drosophila melanogaster (Fruit fly).